A 110-amino-acid chain; its full sequence is MKFVLLFGVLLVTLFSYSSAEMLDDFDQADEDELLSLIEKEEARKDCIPKHHECTSNKHGCCRGHSFKYKCQCTTVVTQSGEETERCFCGTPPHHEAAELVVGFGKKIFG.

The N-terminal stretch at 1–20 is a signal peptide; sequence MKFVLLFGVLLVTLFSYSSA. Residues 21 to 44 constitute a propeptide that is removed on maturation; it reads EMLDDFDQADEDELLSLIEKEEAR. Intrachain disulfides connect cysteine 47–cysteine 62, cysteine 54–cysteine 71, cysteine 61–cysteine 89, and cysteine 73–cysteine 87.

This sequence belongs to the neurotoxin 19 (CSTX) family. 03 subfamily. In terms of tissue distribution, expressed by the venom gland.

It localises to the secreted. The polypeptide is U1-lycotoxin-Ls1mm (Lycosa singoriensis (Wolf spider)).